The following is a 564-amino-acid chain: Poly(U)-binding-splicing factor PUF60 (564 aa).

Positions 1-521 (MATATIALQV…EDAEIIVKIF (521 aa)) are inhibits homodimerization. The interval 37–61 (KWKPPQGTESIKMENGQSTGTKLGL) is disordered. A Glycyl lysine isopeptide (Lys-Gly) (interchain with G-Cter in SUMO2) cross-link involves residue K48. Residue T65 is modified to Phosphothreonine. Residues 82–564 (QSIKSVLVKQ…ERFDNSDLSA (483 aa)) are inhibits transcriptional repression, interaction with ERCC3 and apoptosis induction. K85 is covalently cross-linked (Glycyl lysine isopeptide (Lys-Gly) (interchain with G-Cter in SUMO2)). A Phosphoserine modification is found at S117. 2 consecutive RRM domains span residues 134–212 (CRVY…RPSN) and 231–309 (NRIY…KAVT). S249 is subject to Phosphoserine. K256 carries the post-translational modification N6-acetyllysine. A Phosphothreonine modification is found at T319. The segment at 421 to 442 (KKEKEEEELFPESERPEMLSEQ) is disordered. A Glycyl lysine isopeptide (Lys-Gly) (interchain with G-Cter in SUMO2) cross-link involves residue K424. A compositionally biased stretch (basic and acidic residues) spans 432 to 442 (ESERPEMLSEQ). N6-acetyllysine is present on K459. A Glycyl lysine isopeptide (Lys-Gly) (interchain with G-Cter in SUMO2) cross-link involves residue K463. An RRM 3; atypical domain is found at 467-554 (TVMVLRNMVD…RKVVAEVYDQ (88 aa)).

It belongs to the RRM half pint family. In terms of assembly, homodimer. Associates with the spliceosome. Found in a complex with RO60 and Y5 RNA. Found in a complex with FUBP1 and far upstream element (FUSE) DNA segment. Interacts directly with ERCC3. Interacts with CDK7 and GTF2H1. Interacts with SRSF11/P54. Interacts with ARGLU1; interaction may be involved in ARGLU1-mediated modulation of alternative splicing.

It localises to the nucleus. Its function is as follows. DNA- and RNA-binding protein, involved in several nuclear processes such as pre-mRNA splicing, apoptosis and transcription regulation. In association with FUBP1 regulates MYC transcription at the P2 promoter through the core-TFIIH basal transcription factor. Acts as a transcriptional repressor through the core-TFIIH basal transcription factor. Represses FUBP1-induced transcriptional activation but not basal transcription. Decreases ERCC3 helicase activity. Is also involved in pre-mRNA splicing. Promotes splicing of an intron with weak 3'-splice site and pyrimidine tract in a cooperative manner with U2AF2. Involved in apoptosis induction when overexpressed in HeLa cells. Modulates alternative splicing of several mRNAs. Binds to relaxed DNA of active promoter regions. Binds to the pyrimidine tract and 3'-splice site regions of pre-mRNA; binding is enhanced in presence of U2AF2. Binds to Y5 RNA in association with RO60. Binds to poly(U) RNA. The polypeptide is Poly(U)-binding-splicing factor PUF60 (Rattus norvegicus (Rat)).